A 172-amino-acid polypeptide reads, in one-letter code: 3-hydroxydecanoyl-[acyl-carrier-protein] dehydratase (172 aa).

The active site involves histidine 71.

It belongs to the thioester dehydratase family. FabA subfamily. As to quaternary structure, homodimer.

Its subcellular location is the cytoplasm. It catalyses the reaction a (3R)-hydroxyacyl-[ACP] = a (2E)-enoyl-[ACP] + H2O. The catalysed reaction is (3R)-hydroxydecanoyl-[ACP] = (2E)-decenoyl-[ACP] + H2O. It carries out the reaction (2E)-decenoyl-[ACP] = (3Z)-decenoyl-[ACP]. Its pathway is lipid metabolism; fatty acid biosynthesis. Necessary for the introduction of cis unsaturation into fatty acids. Catalyzes the dehydration of (3R)-3-hydroxydecanoyl-ACP to E-(2)-decenoyl-ACP and then its isomerization to Z-(3)-decenoyl-ACP. Can catalyze the dehydratase reaction for beta-hydroxyacyl-ACPs with saturated chain lengths up to 16:0, being most active on intermediate chain length. The chain is 3-hydroxydecanoyl-[acyl-carrier-protein] dehydratase from Brucella anthropi (strain ATCC 49188 / DSM 6882 / CCUG 24695 / JCM 21032 / LMG 3331 / NBRC 15819 / NCTC 12168 / Alc 37) (Ochrobactrum anthropi).